A 978-amino-acid chain; its full sequence is MSEQANSSGIESLSNGLRERNAQASKPIGDGEVTSQSLEDKLQVEEGDAADAEKKTFGRTPDGKVFTVPPTRDMVSQLLSPSEPKNISDIFVLAILGCHILLLWCLPSSFRIAAFAVIFLFWRASYNIGIGWLLHMQSNGRTLVCWAKKSNIFVNPSTGQNPHPTLYKMLKWELETKISEQYSFDEAPTEYNTWLVFRRVVDLILMCDFTSYCLFAIACGGRPAGESFIMLALRWTTGMSLVLFNLWVKLDAHRVVKDFAWYWGDFFYLIDQELTFDGVFEMAPHPMYSVGYAGYYGISLMAASYKVLFISILAHAAQFAFLVLVENPHIEKTYNVPPPRKRVAVDTDTKLQEDENSHEGSVVSDIANSAPVMPALQPVSMHNLLGLHNIDLYRSTDQSVLLAQLLFFALTTVTPSTPVYQFCFVLNAALWRIWYSVGIGYILNRQSNCKMWTRHFVKYGESNHEAWRQWKGTYHLSMTMTYASFIAAAWKMYSFPQDWGYGLVLLRHILGASLIALQIWTSTSIYESLGEFGWFFGDFFFDQSPKLTYSGIYRFLNNPERVLGLAGVWGAVLITSTKSLVFLALLSHTLTLAFIQLVERPHMQKLYGQSLRRDAGLVRSLKRSLPPSLKQIHGSVDKILDESFEFIEEFIEAARPKLATGVQTFVKDTSALFQKYPARVTISRLEPDLAGYDLKDYSITLEGTQPSQPTQFERASDKEGERARSMQFRRGEQENLIFEYGAPIKVKWTAPLNHSKKDWIGLYMVTDNTSREVTSVASQGRWIATNQASFDSETCEQGLISSDIVLKITREDCEPIDVASGEMVFSGDKLWWTQGVFEFRYHHNGKHNVMAVSRPFEIRIGRFDEDIVEADNYGLVRAAVEAALLPVVQNCFDRDPEIAPQTAEEHYGCLVERDGKYSKRVVFAVQHMFGIEFAPEVVRADGNVRNLAWRICNAKKVLAPYSMSRSNGASTPTTEHED.

Residues 1 to 15 (MSEQANSSGIESLSN) are compositionally biased toward polar residues. The disordered stretch occupies residues 1-63 (MSEQANSSGI…KKTFGRTPDG (63 aa)). Topologically, residues 1–89 (MSEQANSSGI…SPSEPKNISD (89 aa)) are lumenal. A helical transmembrane segment spans residues 90-110 (IFVLAILGCHILLLWCLPSSF). Residues 111-113 (RIA) lie on the Cytoplasmic side of the membrane. A helical transmembrane segment spans residues 114–134 (AFAVIFLFWRASYNIGIGWLL). The Lumenal segment spans residues 135–199 (HMQSNGRTLV…EYNTWLVFRR (65 aa)). Residues 200–220 (VVDLILMCDFTSYCLFAIACG) form a helical membrane-spanning segment. At 221 to 227 (GRPAGES) the chain is on the cytoplasmic side. Residues 228-248 (FIMLALRWTTGMSLVLFNLWV) form a helical membrane-spanning segment. At 249 to 281 (KLDAHRVVKDFAWYWGDFFYLIDQELTFDGVFE) the chain is on the lumenal side. Residues 282–302 (MAPHPMYSVGYAGYYGISLMA) traverse the membrane as a helical segment. Residues 303–304 (AS) lie on the Cytoplasmic side of the membrane. Residues 305 to 325 (YKVLFISILAHAAQFAFLVLV) traverse the membrane as a helical segment. At 326–399 (ENPHIEKTYN…IDLYRSTDQS (74 aa)) the chain is on the lumenal side. Residues 400–420 (VLLAQLLFFALTTVTPSTPVY) form a helical membrane-spanning segment. Residue glutamine 421 is a topological domain, cytoplasmic. A helical transmembrane segment spans residues 422 to 442 (FCFVLNAALWRIWYSVGIGYI). The Lumenal portion of the chain corresponds to 443-473 (LNRQSNCKMWTRHFVKYGESNHEAWRQWKGT). Residues 474–493 (YHLSMTMTYASFIAAAWKMY) form a helical membrane-spanning segment. At 494-498 (SFPQD) the chain is on the cytoplasmic side. Residues 499 to 519 (WGYGLVLLRHILGASLIALQI) form a helical membrane-spanning segment. At 520 to 564 (WTSTSIYESLGEFGWFFGDFFFDQSPKLTYSGIYRFLNNPERVLG) the chain is on the lumenal side. A helical transmembrane segment spans residues 565–585 (LAGVWGAVLITSTKSLVFLAL). The Cytoplasmic portion of the chain corresponds to 586 to 978 (LSHTLTLAFI…ASTPTTEHED (393 aa)). Residues 703–713 (GTQPSQPTQFE) are compositionally biased toward polar residues. The tract at residues 703-724 (GTQPSQPTQFERASDKEGERAR) is disordered. Residues 714 to 724 (RASDKEGERAR) are compositionally biased toward basic and acidic residues.

It belongs to the class VI-like SAM-binding methyltransferase superfamily. CHO2 family.

The protein localises to the endoplasmic reticulum membrane. The catalysed reaction is a 1,2-diacyl-sn-glycero-3-phosphoethanolamine + S-adenosyl-L-methionine = a 1,2-diacyl-sn-glycero-3-phospho-N-methylethanolamine + S-adenosyl-L-homocysteine + H(+). Its pathway is phospholipid metabolism; phosphatidylcholine biosynthesis. Catalyzes the first step of the methylation pathway of phosphatidylcholine biosynthesis, the SAM-dependent methylation of phosphatidylethanolamine (PE) to phosphatidylmonomethylethanolamine (PMME). This Ajellomyces capsulatus (strain G186AR / H82 / ATCC MYA-2454 / RMSCC 2432) (Darling's disease fungus) protein is Phosphatidylethanolamine N-methyltransferase (CHO2).